Here is a 251-residue protein sequence, read N- to C-terminus: Meso-2,3-butanediol dehydrogenase (251 aa).

6 residues coordinate NAD(+): Asn-15, Met-17, Asp-36, Asp-60, Val-61, and Asn-87. (R)-acetoin contacts are provided by Ser-138, Ser-140, and Tyr-151. Ser-138 lines the (S)-acetoin pocket. Tyr-151, Lys-155, Val-184, and Thr-186 together coordinate NAD(+). Tyr-151 is a (S)-acetoin binding site. Tyr-151 functions as the Proton acceptor in the catalytic mechanism.

It belongs to the short-chain dehydrogenases/reductases (SDR) family. As to quaternary structure, homotetramer; dimer of dimers.

It carries out the reaction (R,S)-butane-2,3-diol + NAD(+) = (R)-acetoin + NADH + H(+). The enzyme catalyses (S,S)-butane-2,3-diol + NAD(+) = (S)-acetoin + NADH + H(+). It catalyses the reaction (S)-acetoin + NAD(+) = diacetyl + NADH + H(+). With respect to regulation, oxidation of meso-2,3-butanediol is enhanced in the presence of Fe(2+). Reduction of diacetyl and (3S/3R)-acetoin is slightly enhanced in the presence of Mg(2+) and Mn(2+). Activity is inhibited by several metal ions, particularly Fe(3+) for reduction of diacetyl and acetoin. Its function is as follows. Catalyzes the NAD-dependent oxidation of meso-2,3-butanediol to (3R)-acetoin, and of (2S,3S)-2,3-butanediol to (3S)-acetoin, with much lower efficiency. Can also oxidize several primary alcohols such as glycerol, 1-2-pentanediol and 1,2-propanediol, with lower activity. Cannot use (2R,3R)-2,3-butanediol. In the presence of NADH, catalyzes the reduction of (3R)-acetoin to meso-2,3-butanediol, of (3S)-acetoin to (2S,3S)-2,3-butanediol and of diacetyl to (3S)-acetoin. No activity is detected with NADPH/NADP(+). The polypeptide is Meso-2,3-butanediol dehydrogenase (Serratia marcescens).